The primary structure comprises 201 residues: Dephospho-CoA kinase (201 aa).

One can recognise a DPCK domain in the interval 3-201 (IIGLTGGMAA…ALLHRLREAS (199 aa)). Position 11–16 (11–16 (AAGKST)) interacts with ATP.

This sequence belongs to the CoaE family.

Its subcellular location is the cytoplasm. It catalyses the reaction 3'-dephospho-CoA + ATP = ADP + CoA + H(+). It participates in cofactor biosynthesis; coenzyme A biosynthesis; CoA from (R)-pantothenate: step 5/5. In terms of biological role, catalyzes the phosphorylation of the 3'-hydroxyl group of dephosphocoenzyme A to form coenzyme A. The protein is Dephospho-CoA kinase of Gluconobacter oxydans (strain 621H) (Gluconobacter suboxydans).